We begin with the raw amino-acid sequence, 223 residues long: Noggin (223 aa).

The signal sequence occupies residues 1 to 26; that stretch reads MDHSQCLVTIYAAAVLLGLRLQQGSC. N-linked (GlcNAc...) asparagine glycosylation occurs at N61. Cystine bridges form between C146–C183, C169–C219, C175–C221, and C198–C206.

This sequence belongs to the noggin family. Homodimer.

Its subcellular location is the secreted. Its function is as follows. Inhibitor of bone morphogenetic proteins (BMP) signaling. Controls somitogenesis by sequestering the BMP-4 activity which in turn differentiates distinct subtypes of the mesoderm along the mediolateral axis. This is Noggin (NOG) from Gallus gallus (Chicken).